Consider the following 137-residue polypeptide: MDLQSFSRGNPFSGLACVWCREPLTEVDAFRCMIKDFHVVYRDGVKFGACTTCLENCLDKERRLWKGVPVTGEEAQLLHGKSLDRLCIRCCYCGGKLTKNEKQRHVLYNEPFCKTRSNIIRGRCYDCCRHGSRSNYP.

2 zinc fingers span residues 17 to 53 (CVWC…CTTC) and 90 to 127 (CCYC…CYDC).

Belongs to the papillomaviridae E6 protein family. As to quaternary structure, forms homodimers. Interacts with ubiquitin-protein ligase UBE3A/E6-AP; this interaction stimulates UBE3A ubiquitin activity. Interacts with host BAK1.

It localises to the host cytoplasm. The protein localises to the host nucleus. Functionally, plays a major role in the induction and maintenance of cellular transformation. E6 associates with host UBE3A/E6-AP ubiquitin-protein ligase and modulates its activity. Protects host keratinocytes from apoptosis by mediating the degradation of host BAK1. May also inhibit host immune response. The polypeptide is Protein E6 (Bos taurus (Bovine)).